A 390-amino-acid chain; its full sequence is Lipid-A-disaccharide synthase (390 aa).

Belongs to the LpxB family.

The catalysed reaction is a lipid X + a UDP-2-N,3-O-bis[(3R)-3-hydroxyacyl]-alpha-D-glucosamine = a lipid A disaccharide + UDP + H(+). Its pathway is bacterial outer membrane biogenesis; LPS lipid A biosynthesis. Its function is as follows. Condensation of UDP-2,3-diacylglucosamine and 2,3-diacylglucosamine-1-phosphate to form lipid A disaccharide, a precursor of lipid A, a phosphorylated glycolipid that anchors the lipopolysaccharide to the outer membrane of the cell. This chain is Lipid-A-disaccharide synthase, found in Rickettsia felis (strain ATCC VR-1525 / URRWXCal2) (Rickettsia azadi).